The primary structure comprises 177 residues: Peptidyl-tRNA hydrolase (177 aa).

Tyr14 contacts tRNA. His19 functions as the Proton acceptor in the catalytic mechanism. Phe64, Asn66, and Asn112 together coordinate tRNA.

Belongs to the PTH family. Monomer.

The protein localises to the cytoplasm. The catalysed reaction is an N-acyl-L-alpha-aminoacyl-tRNA + H2O = an N-acyl-L-amino acid + a tRNA + H(+). Hydrolyzes ribosome-free peptidyl-tRNAs (with 1 or more amino acids incorporated), which drop off the ribosome during protein synthesis, or as a result of ribosome stalling. Its function is as follows. Catalyzes the release of premature peptidyl moieties from peptidyl-tRNA molecules trapped in stalled 50S ribosomal subunits, and thus maintains levels of free tRNAs and 50S ribosomes. The polypeptide is Peptidyl-tRNA hydrolase (Latilactobacillus sakei (Lactobacillus sakei)).